Consider the following 151-residue polypeptide: Ribosome maturation factor RimP (151 aa).

Belongs to the RimP family.

It localises to the cytoplasm. Required for maturation of 30S ribosomal subunits. The chain is Ribosome maturation factor RimP from Colwellia psychrerythraea (strain 34H / ATCC BAA-681) (Vibrio psychroerythus).